We begin with the raw amino-acid sequence, 287 residues long: MALCNLNPTQGIFPLQGLSKSQEFICFSLLQSPRCGSYSSLKTKRFGFCIRSKFSEKEAGKLDRGYVATVNSKEIKKVGKKEHHLWKKNDSAGSGQKALNLVRMLSGLPNEKEAVYGALNKWVAWEVEFPIIAAAKALQILRKRSQWHRVIQLAKWMLSKGQGATMGTYDILLLAFDMDERADEAESLWNMILHTHTRSIPRRLFARMIALYAHHDLHDKVIEVFADMEELKVSPDEDSARRVARAFRELNQEENRKLILRRYLSEYKYIYFNGERVRVKRYFSEDS.

The transit peptide at 1–34 directs the protein to the chloroplast; that stretch reads MALCNLNPTQGIFPLQGLSKSQEFICFSLLQSPR. PPR repeat units lie at residues 165–199 and 201–235; these read TMGTYDILLLAFDMDERADEAESLWNMILHTHTRS and PRRLFARMIALYAHHDLHDKVIEVFADMEELKVSP.

The protein belongs to the PPR family. P subfamily.

It is found in the plastid. It localises to the chloroplast. In Arabidopsis thaliana (Mouse-ear cress), this protein is Pentatricopeptide repeat-containing protein At4g18975, chloroplastic.